Reading from the N-terminus, the 357-residue chain is UDP-N-acetylglucosamine--N-acetylmuramyl-(pentapeptide) pyrophosphoryl-undecaprenol N-acetylglucosamine transferase (357 aa).

UDP-N-acetyl-alpha-D-glucosamine-binding positions include 12-14 (TAG), Arg166, Ser196, and Gln291.

The protein belongs to the glycosyltransferase 28 family. MurG subfamily.

The protein localises to the cell membrane. The enzyme catalyses di-trans,octa-cis-undecaprenyl diphospho-N-acetyl-alpha-D-muramoyl-L-alanyl-D-glutamyl-meso-2,6-diaminopimeloyl-D-alanyl-D-alanine + UDP-N-acetyl-alpha-D-glucosamine = di-trans,octa-cis-undecaprenyl diphospho-[N-acetyl-alpha-D-glucosaminyl-(1-&gt;4)]-N-acetyl-alpha-D-muramoyl-L-alanyl-D-glutamyl-meso-2,6-diaminopimeloyl-D-alanyl-D-alanine + UDP + H(+). It functions in the pathway cell wall biogenesis; peptidoglycan biosynthesis. In terms of biological role, cell wall formation. Catalyzes the transfer of a GlcNAc subunit on undecaprenyl-pyrophosphoryl-MurNAc-pentapeptide (lipid intermediate I) to form undecaprenyl-pyrophosphoryl-MurNAc-(pentapeptide)GlcNAc (lipid intermediate II). In Geobacillus kaustophilus (strain HTA426), this protein is UDP-N-acetylglucosamine--N-acetylmuramyl-(pentapeptide) pyrophosphoryl-undecaprenol N-acetylglucosamine transferase.